Here is a 243-residue protein sequence, read N- to C-terminus: Glutathione S-transferase U14 (243 aa).

The GST N-terminal domain maps to 5–87 (DTVKLIGCSD…YLDEAWPSDP (83 aa)). Glutathione-binding positions include 15-16 (DP), 44-45 (EK), 58-59 (KT), and 71-72 (ES). In terms of domain architecture, GST C-terminal spans 93–220 (NAYDRASARF…MPTVEEVTEL (128 aa)). The residue at position 159 (T159) is a Phosphothreonine.

Belongs to the GST superfamily. Tau family.

Its subcellular location is the cytoplasm. The protein resides in the cytosol. It carries out the reaction RX + glutathione = an S-substituted glutathione + a halide anion + H(+). Its function is as follows. May be involved in the conjugation of reduced glutathione to a wide number of exogenous and endogenous hydrophobic electrophiles and have a detoxification role against certain herbicides. The sequence is that of Glutathione S-transferase U14 (GSTU14) from Arabidopsis thaliana (Mouse-ear cress).